Consider the following 593-residue polypeptide: ETS-related transcription factor Elf-2 (593 aa).

Position 107 is a phosphoserine (serine 107). The disordered stretch occupies residues 146-201 (VEVSTEESEPMDTSPIPTSPDSHEPMKKKKVGRKPKTQQSPISNGSPELGIKKKPR). Positions 171–181 (MKKKKVGRKPK) are enriched in basic residues. The residue at position 182 (threonine 182) is a Phosphothreonine. A compositionally biased stretch (polar residues) spans 182–191 (TQQSPISNGS). Serine 185 and serine 191 each carry phosphoserine. Positions 208–290 (TYLWEFLLDL…EGQRLVYQFK (83 aa)) form a DNA-binding region, ETS. Phosphoserine occurs at positions 363 and 372. Threonine 376 bears the Phosphothreonine mark. Position 430 is a phosphoserine (serine 430). An Omega-N-methylarginine modification is found at arginine 494. Threonine 521 carries the post-translational modification Phosphothreonine. Residue lysine 536 forms a Glycyl lysine isopeptide (Lys-Gly) (interchain with G-Cter in SUMO2) linkage.

It belongs to the ETS family. Interacts with the LIM domains of LMO2. Interacts via its N-terminal region with RUNX1. In terms of tissue distribution, expressed in all fetal and adult tissues examined. Among fetal tissues, highest levels of expression detected in heart, lung, liver and kidney, and lower levels in brain. Among adult tissues, highest levels of expression detected in heart, placenta, lung, skeletal muscle, spleen, thymus, testis and ovary. Moderate expression in prostate, small intestine, kidney, liver and pancreas, and weak expression in colon, brain and peripheral blood lymphocytes.

Its subcellular location is the nucleus. Functionally, isoform 1 transcriptionally activates the LYN and BLK promoters and acts synergistically with RUNX1 to transactivate the BLK promoter. Isoform 2 may function in repression of RUNX1-mediated transactivation. This is ETS-related transcription factor Elf-2 from Homo sapiens (Human).